Here is a 1243-residue protein sequence, read N- to C-terminus: Plasma membrane calcium-transporting ATPase 2 (1243 aa).

Residues 1–13 are compositionally biased toward polar residues; the sequence is MGDMTNSDFYSKN. Residues 1 to 24 are disordered; that stretch reads MGDMTNSDFYSKNQRNESSHGGEF. The Cytoplasmic segment spans residues 1–94; the sequence is MGDMTNSDFY…NFIPPKKPKT (94 aa). Position 18 is a phosphoserine (Ser18). Residues 95–115 form a helical membrane-spanning segment; sequence FLQLVWEALQDVTLIILEIAA. Over 116–152 the chain is Extracellular; it reads IISLGLSFYHPPGEGNEGCATAQGGAEDEGEAEAGWI. A helical membrane pass occupies residues 153 to 173; the sequence is EGAAILLSVICVVLVTAFNDW. At 174-390 the chain is on the cytoplasmic side; the sequence is SKEKQFRGLQ…KEKSVLQGKL (217 aa). Residues 334-381 form a disordered region; that stretch reads GKMQDGNVDASQSKAKQQDGAAAMEMQPLKSAEGGDADDRKKASMHKK. Residues 391-410 form a helical membrane-spanning segment; the sequence is TKLAVQIGKAGLVMSAITVI. Residues 411 to 443 are Extracellular-facing; the sequence is ILVLYFTVDTFVVNKKPWLPECTPVYVQYFVKF. A helical membrane pass occupies residues 444 to 461; the sequence is FIIGVTVLVVAVPEGLPL. At 462 to 875 the chain is on the cytoplasmic side; it reads AVTISLAYSV…MWGRNVYDSI (414 aa). The 4-aspartylphosphate intermediate role is filled by Asp499. Mg(2+) contacts are provided by Asp820 and Asp824. Residues 876–895 form a helical membrane-spanning segment; that stretch reads SKFLQFQLTVNVVAVIVAFT. Topologically, residues 896–905 are extracellular; that stretch reads GACITQDSPL. Residues 906–926 form a helical membrane-spanning segment; the sequence is KAVQMLWVNLIMDTFASLALA. Residues 927 to 946 lie on the Cytoplasmic side of the membrane; it reads TEPPTETLLLRKPYGRNKPL. Residues 947-969 form a helical membrane-spanning segment; that stretch reads ISRTMMKNILGHAVYQLALIFTL. At 970-987 the chain is on the extracellular side; the sequence is LFVGEKMFQIDSGRNAPL. The helical transmembrane segment at 988-1009 threads the bilayer; that stretch reads HSPPSEHYTIIFNTFVMMQLFN. Residues 1010–1028 lie on the Cytoplasmic side of the membrane; the sequence is EINARKIHGERNVFDGIFR. Residues 1029-1050 traverse the membrane as a helical segment; that stretch reads NPIFCTIVLGTFAIQIVIVQFG. Residues 1051–1060 lie on the Extracellular side of the membrane; the sequence is GKPFSCSPLQ. The chain crosses the membrane as a helical span at residues 1061 to 1082; the sequence is LDQWMWCIFIGLGELVWGQVIA. The Cytoplasmic portion of the chain corresponds to 1083 to 1243; that stretch reads TIPTSRLKFL…SPIHSLETSL (161 aa). Phosphoserine occurs at positions 1120, 1132, and 1134. The calmodulin-binding subdomain A stretch occupies residues 1123–1140; that stretch reads LRRGQILWFRGLNRIQTQ. Thr1139 is subject to Phosphothreonine; by PKC. The segment at 1141 to 1150 is calmodulin-binding subdomain B; that stretch reads IRVVKAFRSS. Ala1146, Leu1151, Ser1163, His1165, Asp1177, and Ser1178 each carry phosphoserine. Thr1188 carries the phosphothreonine modification. Positions 1194–1243 are disordered; the sequence is AALKQNSSPPSSLNKNNSAIDSGINLTTDTSKSATSSSPGSPIHSLETSL. Low complexity-rich tracts occupy residues 1196–1211 and 1220–1234; these read LKQN…KNNS and TTDT…SPGS. Phosphoserine; by PKA is present on Ser1201. Ser1211 bears the Phosphoserine mark.

Belongs to the cation transport ATPase (P-type) (TC 3.A.3) family. Type IIB subfamily. In terms of assembly, interacts with PDZD11. As to expression, mainly expressed in brain cortex. Found in low levels in skeletal muscle, heart muscle, stomach, liver, kidney and lung. Isoforms containing segment B are found in brain cortex and at low levels in other tissues. Isoforms containing segments X and W are found at low levels in all tissues. Isoforms containing segment A and segment Z are found at low levels in skeletal muscle and heart muscle.

It localises to the cell membrane. It is found in the synapse. The protein localises to the apical cell membrane. Its subcellular location is the basolateral cell membrane. The catalysed reaction is Ca(2+)(in) + ATP + H2O = Ca(2+)(out) + ADP + phosphate + H(+). Up-regulated by calmodulin which increases the affinity of the pump for Ca(2+) ions. Functionally, ATP-driven Ca(2+) ion pump involved in the maintenance of basal intracellular Ca(2+) levels in specialized cells of cerebellar circuit and vestibular and cochlear systems. Uses ATP as an energy source to transport cytosolic Ca(2+) ions across the plasma membrane to the extracellular compartment. Has fast activation and Ca(2+) clearance rate suited to control fast neuronal Ca(2+) dynamics. At parallel fiber to Purkinje neuron synapse, mediates presynaptic Ca(2+) efflux in response to climbing fiber-induced Ca(2+) rise. Provides for fast return of Ca(2+) concentrations back to their resting levels, ultimately contributing to long-term depression induction and motor learning. Plays an essential role in hearing and balance. In cochlear hair cells, shuttles Ca(2+) ions from stereocilia to the endolymph and dissipates Ca(2+) transients generated by the opening of the mechanoelectrical transduction channels. Regulates Ca(2+) levels in the vestibular system, where it contributes to the formation of otoconia. In non-excitable cells, regulates Ca(2+) signaling through spatial control of Ca(2+) ions extrusion and dissipation of Ca(2+) transients generated by store-operated channels. In lactating mammary gland, allows for the high content of Ca(2+) ions in the milk. This Homo sapiens (Human) protein is Plasma membrane calcium-transporting ATPase 2.